The following is a 362-amino-acid chain: Histidinol-phosphate aminotransferase (362 aa).

Lys210 bears the N6-(pyridoxal phosphate)lysine mark.

The protein belongs to the class-II pyridoxal-phosphate-dependent aminotransferase family. Histidinol-phosphate aminotransferase subfamily. Homodimer. It depends on pyridoxal 5'-phosphate as a cofactor.

It catalyses the reaction L-histidinol phosphate + 2-oxoglutarate = 3-(imidazol-4-yl)-2-oxopropyl phosphate + L-glutamate. It participates in amino-acid biosynthesis; L-histidine biosynthesis; L-histidine from 5-phospho-alpha-D-ribose 1-diphosphate: step 7/9. In Rhodopirellula baltica (strain DSM 10527 / NCIMB 13988 / SH1), this protein is Histidinol-phosphate aminotransferase.